We begin with the raw amino-acid sequence, 158 residues long: Large ribosomal subunit protein uL16 (158 aa).

Positions 1 to 22 are disordered; that stretch reads MLSPKRTKYRKQQRGRMKGKAT.

This sequence belongs to the universal ribosomal protein uL16 family. In terms of assembly, part of the 50S ribosomal subunit.

Functionally, binds 23S rRNA and is also seen to make contacts with the A and possibly P site tRNAs. The chain is Large ribosomal subunit protein uL16 from Synechococcus sp. (strain JA-3-3Ab) (Cyanobacteria bacterium Yellowstone A-Prime).